Here is a 720-residue protein sequence, read N- to C-terminus: Polyribonucleotide nucleotidyltransferase (720 aa).

Residues Asp-484 and Asp-490 each coordinate Mg(2+). Residues 551-610 (PRMYKINIDPSKIGSVIGSGGKTIRSIIEQTNTTVDIENDGTVVIGATDEASAKKAIKII) enclose the KH domain. The 69-residue stretch at 620–688 (GSIYTGKVTR…NQGRVNLSHR (69 aa)) folds into the S1 motif domain. Residues 697 to 720 (PISRNRDSQPRRPGPFRPSDRSNS) form a disordered region.

Belongs to the polyribonucleotide nucleotidyltransferase family. Requires Mg(2+) as cofactor.

The protein resides in the cytoplasm. The catalysed reaction is RNA(n+1) + phosphate = RNA(n) + a ribonucleoside 5'-diphosphate. Involved in mRNA degradation. Catalyzes the phosphorolysis of single-stranded polyribonucleotides processively in the 3'- to 5'-direction. The chain is Polyribonucleotide nucleotidyltransferase from Dehalococcoides mccartyi (strain CBDB1).